A 445-amino-acid polypeptide reads, in one-letter code: GTPase Der (445 aa).

EngA-type G domains lie at 3-167 (PVIA…YAGQ) and 180-353 (IKIA…AAAM). Residues 9-16 (GRPNVGKS), 56-60 (DTGGF), 119-122 (NKAE), 186-193 (GRPNVGKS), 233-237 (DTAGL), and 298-301 (NKWD) each bind GTP. A KH-like domain is found at 354–438 (AKLPTPKLTR…PLRIEFRSSN (85 aa)).

The protein belongs to the TRAFAC class TrmE-Era-EngA-EngB-Septin-like GTPase superfamily. EngA (Der) GTPase family. Associates with the 50S ribosomal subunit.

In terms of biological role, GTPase that plays an essential role in the late steps of ribosome biogenesis. The sequence is that of GTPase Der from Burkholderia ambifaria (strain ATCC BAA-244 / DSM 16087 / CCUG 44356 / LMG 19182 / AMMD) (Burkholderia cepacia (strain AMMD)).